The following is a 237-amino-acid chain: GCN5-related N-acetyltransferase 3, chloroplastic (237 aa).

Residues methionine 1–valine 93 constitute a chloroplast transit peptide. Positions serine 94–alanine 237 constitute an N-acetyltransferase domain. Acetyl-CoA is bound by residues leucine 171–valine 173, arginine 179–lysine 184, phenylalanine 207–aspartate 209, and phenylalanine 214.

It belongs to the acetyltransferase family. GNAT subfamily. In terms of assembly, oligomer. Post-translationally, autoacetylated. Expressed in green tissues.

It is found in the plastid. The protein resides in the chloroplast. It catalyses the reaction an N-terminal L-alpha-aminoacyl-[protein] + acetyl-CoA = N-terminal N(alpha)-acetyl-L-alpha-aminoacyl-[protein] + CoA + H(+). It carries out the reaction L-lysyl-[protein] + acetyl-CoA = N(6)-acetyl-L-lysyl-[protein] + CoA + H(+). Protein acetyltransferase with dual specificity triggering both N-alpha-acetylation (NTA) and epsilon-lysine acetylation (KA), possibly with a low efficiency or toward specific plastid substrates. The sequence is that of GCN5-related N-acetyltransferase 3, chloroplastic from Arabidopsis thaliana (Mouse-ear cress).